Here is a 385-residue protein sequence, read N- to C-terminus: Probable di-N-acetylchitobiase 2 (385 aa).

An N-terminal signal peptide occupies residues 1 to 15; sequence MRIILLLFLIVFVVA. The GH18 domain maps to 16 to 377; the sequence is QSSSSSSSSG…DALASFFPQS (362 aa). 2 N-linked (GlcNAc...) asparagine glycosylation sites follow: asparagine 51 and asparagine 101. Residue glutamate 129 is the Proton donor of the active site. Residues asparagine 223, asparagine 272, and asparagine 296 are each glycosylated (N-linked (GlcNAc...) asparagine).

Belongs to the glycosyl hydrolase 18 family.

It is found in the lysosome. Its function is as follows. Involved in the degradation of asparagine-linked glycoproteins. May hydrolyze of N-acetyl-beta-D-glucosamine (1-4)N-acetylglucosamine chitobiose core from the reducing end of the bond. This is Probable di-N-acetylchitobiase 2 (ctbs2) from Dictyostelium discoideum (Social amoeba).